The following is a 377-amino-acid chain: Galactoside alpha-(1,2)-fucosyltransferase 1 (377 aa).

At 1–8 the chain is on the cytoplasmic side; that stretch reads MWTPSRRQ. Residues 9 to 26 form a helical; Signal-anchor for type II membrane protein membrane-spanning segment; the sequence is LCLAFLLVCVLSAGSFFF. The Lumenal segment spans residues 27–377; sequence HLNGGNFFRN…WKPDSLFRLV (351 aa). N-linked (GlcNAc...) asparagine glycans are attached at residues Asn67, Asn303, and Asn329.

It belongs to the glycosyltransferase 11 family. In the adult, highly expressed in pancreas, testis and epididymis and to a lesser extent in thymus, lung, stomach, small intestine, colon, spleen and uterus. Not expressed in brain, heart, skeletal muscle, kidney, liver and bone marrow. Expressed in epididymis and testis.

Its subcellular location is the golgi apparatus. The protein resides in the golgi stack membrane. The enzyme catalyses a beta-D-galactosyl-(1-&gt;4)-N-acetyl-beta-D-glucosaminyl derivative + GDP-beta-L-fucose = an alpha-L-Fuc-(1-&gt;2)-beta-D-Gal-(1-&gt;4)-beta-D-GlcNAc derivative + GDP + H(+). It catalyses the reaction a ganglioside GA1 + GDP-beta-L-fucose = a ganglioside Fuc-GA1 + GDP + H(+). The catalysed reaction is a beta-D-Gal-(1-&gt;3)-beta-D-GlcNAc-(1-&gt;3)-beta-D-Gal-(1-&gt;4)-beta-D-Glc-(1&lt;-&gt;1')-Cer(d18:1(4E)) + GDP-beta-L-fucose = alpha-L-fucosyl-(1-&gt;2)- beta-D-galactosyl-(1-&gt;3)-N-acetyl-beta-D-glucosaminyl-(1-&gt;3)-beta-D-galactosyl-(1-&gt;4)-beta-D-glucosyl-(1&lt;-&gt;1')-N-acylsphing-4-enine + GDP + H(+). It carries out the reaction a neolactoside nLc4Cer(d18:1(4E)) + GDP-beta-L-fucose = a neolactoside IV(2)-alpha-Fuc-nLc4Cer(d18:1(4E)) + GDP + H(+). The enzyme catalyses a ganglioside GM1 + GDP-beta-L-fucose = a ganglioside Fuc-GM1 + GDP + H(+). It catalyses the reaction beta-D-galactosyl-(1-&gt;3)-N-acetyl-D-galactosamine + GDP-beta-L-fucose = alpha-L-fucosyl-(1-&gt;2)-beta-D-galactosyl-(1-&gt;3)-N-acetyl-D-galactosamine + GDP + H(+). The protein operates within protein modification; protein glycosylation. Catalyzes the transfer of L-fucose, from a guanosine diphosphate-beta-L-fucose, to the terminal galactose residue of glycoconjugates through an alpha(1,2) linkage leading to H antigen synthesis that is an intermediate substrate in the synthesis of ABO blood group antigens. H antigen is essential for maturation of the glomerular layer of the main olfactory bulb, in cell migration and early cell-cell contacts during tumor associated angiogenesis. Preferentially fucosylates soluble lactose and to a lesser extent, fucosylates glycolipids gangliosides GA1 and GM1a. The sequence is that of Galactoside alpha-(1,2)-fucosyltransferase 1 from Mus musculus (Mouse).